The sequence spans 331 residues: Ketol-acid reductoisomerase (NADP(+)) (331 aa).

Positions 3–183 constitute a KARI N-terminal Rossmann domain; that stretch reads AQMYYDDDAD…GGTRAGALKT (181 aa). Residues 26–29, serine 52, and serine 54 contribute to the NADP(+) site; that span reads YGSQ. Histidine 109 is a catalytic residue. Glycine 135 contacts NADP(+). The region spanning 184-329 is the KARI C-terminal knotted domain; that stretch reads TFKEETETDL…TELRSLMSWL (146 aa). Residues aspartate 192, glutamate 196, glutamate 228, and glutamate 232 each coordinate Mg(2+). Residue serine 253 coordinates substrate.

Belongs to the ketol-acid reductoisomerase family. The cofactor is Mg(2+).

The catalysed reaction is (2R)-2,3-dihydroxy-3-methylbutanoate + NADP(+) = (2S)-2-acetolactate + NADPH + H(+). The enzyme catalyses (2R,3R)-2,3-dihydroxy-3-methylpentanoate + NADP(+) = (S)-2-ethyl-2-hydroxy-3-oxobutanoate + NADPH + H(+). It functions in the pathway amino-acid biosynthesis; L-isoleucine biosynthesis; L-isoleucine from 2-oxobutanoate: step 2/4. Its pathway is amino-acid biosynthesis; L-valine biosynthesis; L-valine from pyruvate: step 2/4. In terms of biological role, involved in the biosynthesis of branched-chain amino acids (BCAA). Catalyzes an alkyl-migration followed by a ketol-acid reduction of (S)-2-acetolactate (S2AL) to yield (R)-2,3-dihydroxy-isovalerate. In the isomerase reaction, S2AL is rearranged via a Mg-dependent methyl migration to produce 3-hydroxy-3-methyl-2-ketobutyrate (HMKB). In the reductase reaction, this 2-ketoacid undergoes a metal-dependent reduction by NADPH to yield (R)-2,3-dihydroxy-isovalerate. This chain is Ketol-acid reductoisomerase (NADP(+)), found in Thermobifida fusca (strain YX).